The sequence spans 296 residues: Cell surface glycoprotein CD200 receptor 3 (296 aa).

Residues 1-25 (MHALGRTLALMLLIFITILVPESSC) form the signal peptide. Residues 26–245 (SVKGREEIPP…NRGTTSILPS (220 aa)) are Extracellular-facing. Residues 48 to 162 (PDGVGVTMEI…GIFQERHSIQ (115 aa)) form the Ig-like V-type domain. Cysteine 75 and cysteine 146 form a disulfide bridge. Residues 151–232 (TDGIFQERHS…SHLTDNWILS (82 aa)) enclose the Ig-like C2-type domain. Residues asparagine 167 and asparagine 199 are each glycosylated (N-linked (GlcNAc...) asparagine). A disulfide bridge links cysteine 172 with cysteine 220. The chain crosses the membrane as a helical span at residues 246–266 (LLSILYVKLAVTVLIVGFAFF). At 267-296 (QKRNYFSSRDLVFMKERRSKRSVWQREALG) the chain is on the cytoplasmic side.

This sequence belongs to the CD200R family. As to quaternary structure, isoform 3 interacts with TYROBP. Isoform 8 does not interact with TYROBP. As to expression, expressed in uterus and bone marrow-derived mast cells (at protein level). Expressed in uterus, spleen, bone marrow-derived dendritic, basophil and mast cells. Expressed in the lung of N.brasiliensis-infected mice. Weakly expressed in brain, testis, lung and thymus.

The protein localises to the membrane. Functionally, according to PubMed:15187158 isoform 4 is a receptor for the CD200 cell surface glycoprotein. According to PubMed:16081818 isoform 4 is not a receptor for the CD200/OX2 cell surface glycoprotein. Isoform 1, isoform 2 and isoform 3 are involved in the recruitment or surface expression of the TYROBP receptor. Isoform 6, isoform 7 and isoform 8 are not involved in the recruitment or surface expression of the TYROBP receptor. This Mus musculus (Mouse) protein is Cell surface glycoprotein CD200 receptor 3 (Cd200r3).